A 361-amino-acid polypeptide reads, in one-letter code: MKNLFLFCRAGYEKECAAEIQQRAAELNVGGFVKANNNDAYVVYQCFEEDGGDTLVKQLPLDSLIFARQMFAASELLADLPESDRVSPIVAALSEVSKAGELRVETPDTNEAKELSAFCRKFTVPLRQHLKKSGSLLAQENPKRPIIHVCFIGPGRAYVGYSFSNNSSPYFMGIPRLKMAADAPSRSSLKLDEAFAQFVPKEEQEVRVRSGMNAVDLGACPGGWTYQLVRRGMMVSAVDNGPMNEKLMETGQVKHFREDGFRFEPQRKNIYWLVCDMVEKPARVAELIEAWAINGWFKEAIFNLKLPMKSRYKEVMAILNTMQEILKENGINEFQLQCKHLYHDRDEVTVHLWIRPSQAWN.

Residues Ser-187, 220–223, Asp-239, Asp-259, and Asp-276 each bind S-adenosyl-L-methionine; that span reads CPGG. The active-site Proton acceptor is Lys-305.

The protein belongs to the class I-like SAM-binding methyltransferase superfamily. RNA methyltransferase RlmE family. RlmM subfamily. In terms of assembly, monomer.

It localises to the cytoplasm. It carries out the reaction cytidine(2498) in 23S rRNA + S-adenosyl-L-methionine = 2'-O-methylcytidine(2498) in 23S rRNA + S-adenosyl-L-homocysteine + H(+). In terms of biological role, catalyzes the 2'-O-methylation at nucleotide C2498 in 23S rRNA. The polypeptide is Ribosomal RNA large subunit methyltransferase M (Shewanella sp. (strain ANA-3)).